Here is a 406-residue protein sequence, read N- to C-terminus: GTPase Obg (406 aa).

The 159-residue stretch at 1–159 (MKFVDEVSIF…RDLKLELKVL (159 aa)) folds into the Obg domain. A disordered region spans residues 126-149 (GNTRFKSSTNRAPRQTTPGKPGES). A compositionally biased stretch (polar residues) spans 129–143 (RFKSSTNRAPRQTTP). One can recognise an OBG-type G domain in the interval 160–333 (ADVGLLGLPN…ICRDIMHYLE (174 aa)). GTP is bound by residues 166–173 (GLPNAGKS), 191–195 (FTTLV), 213–216 (DIPG), 283–286 (NKMD), and 314–316 (SAI). Residues serine 173 and threonine 193 each coordinate Mg(2+). Positions 376-406 (SGVRSVDDIDEDDDFFDDEDDDGPEIIYVRD) are disordered. The segment covering 383-399 (DIDEDDDFFDDEDDDGP) has biased composition (acidic residues).

It belongs to the TRAFAC class OBG-HflX-like GTPase superfamily. OBG GTPase family. In terms of assembly, monomer. Mg(2+) serves as cofactor.

The protein localises to the cytoplasm. Its function is as follows. An essential GTPase which binds GTP, GDP and possibly (p)ppGpp with moderate affinity, with high nucleotide exchange rates and a fairly low GTP hydrolysis rate. Plays a role in control of the cell cycle, stress response, ribosome biogenesis and in those bacteria that undergo differentiation, in morphogenesis control. The polypeptide is GTPase Obg (Ectopseudomonas mendocina (strain ymp) (Pseudomonas mendocina)).